The primary structure comprises 103 residues: N(4)-acetylcytidine amidohydrolase (103 aa).

The region spanning 6-94 (ITFFQRFQND…IAEIYPNQTQ (89 aa)) is the ASCH domain. Lysine 21 acts as the Proton acceptor in catalysis. The Nucleophile role is filled by threonine 24. Residue glutamate 74 is the Proton donor of the active site.

The protein belongs to the N(4)-acetylcytidine amidohydrolase family.

It carries out the reaction N(4)-acetylcytidine + H2O = cytidine + acetate + H(+). The enzyme catalyses N(4)-acetyl-2'-deoxycytidine + H2O = 2'-deoxycytidine + acetate + H(+). The catalysed reaction is N(4)-acetylcytosine + H2O = cytosine + acetate + H(+). Catalyzes the hydrolysis of N(4)-acetylcytidine (ac4C). The chain is N(4)-acetylcytidine amidohydrolase (yqfB) from Salmonella heidelberg (strain SL476).